The following is a 216-amino-acid chain: UPF0301 protein Nham_3550 (216 aa).

Basic residues predominate over residues 1-10 (MSAARKRPGT). Positions 1-25 (MSAARKRPGTGRRQTDDADTGAPDQ) are disordered.

Belongs to the UPF0301 (AlgH) family.

This chain is UPF0301 protein Nham_3550, found in Nitrobacter hamburgensis (strain DSM 10229 / NCIMB 13809 / X14).